The chain runs to 373 residues: Centrosomal protein of 41 kDa (373 aa).

The tract at residues 91–137 is disordered; the sequence is LEDNDSATSEADAEIAAKTNGKGSPEEQSPSPVQFINSTGAGDSSRS. Residues Ser96 and Ser99 each carry the phosphoserine modification. A Phosphothreonine modification is found at Thr109. Residues Ser114 and Ser121 each carry the phosphoserine modification. A compositionally biased stretch (polar residues) spans 116–137; sequence EEQSPSPVQFINSTGAGDSSRS. In terms of domain architecture, Rhodanese spans 169-266; sequence PDCPFLLLDV…LAQKFPEGLV (98 aa). The segment at 317–373 is disordered; that stretch reads DQGPADNPSRLNQNNSAGKDSKVAACRGGQNLPTSCPASHSSPRTLTSGHLQGKPWK. The span at 325–334 shows a compositional bias: polar residues; that stretch reads SRLNQNNSAG. Arg343 carries the post-translational modification Omega-N-methylarginine. A compositionally biased stretch (polar residues) spans 347 to 366; the sequence is NLPTSCPASHSSPRTLTSGH.

It belongs to the CEP41 family. In terms of assembly, found in a complex with TTLL6.

Its subcellular location is the cytoplasm. The protein localises to the cytoskeleton. The protein resides in the microtubule organizing center. It is found in the centrosome. It localises to the cell projection. Its subcellular location is the cilium. The protein localises to the cilium basal body. Required during ciliogenesis for tubulin glutamylation in cilium. Probably acts by participating in the transport of TTLL6, a tubulin polyglutamylase, between the basal body and the cilium. In Mus musculus (Mouse), this protein is Centrosomal protein of 41 kDa (Cep41).